A 744-amino-acid chain; its full sequence is Adenosylcobalamin-dependent ribonucleoside-triphosphate reductase (744 aa).

A disulfide bridge links C120 with C424. Residues 148–159 (SMPFSFLFDQLM) form an effector region-1 region. Residues 169 to 318 (VDENINQIPK…ICNLIGKTVV (150 aa)) form an effector region-2 region. Catalysis depends on residues C413 and E415. An adenosylcobalamin-binding-1 region spans residues 570–631 (FHYSGYLIQR…SDNFASAGTV (62 aa)). Residues 690 to 729 (LKQAPKEPISKEKYEKADNHITGNVEIVFEQTNEDQKGLE) are adenosylcobalamin-binding-2.

The protein belongs to the class II ribonucleoside-triphosphate reductase family. In terms of assembly, monomer. Requires adenosylcob(III)alamin as cofactor.

The catalysed reaction is a 2'-deoxyribonucleoside 5'-triphosphate + [thioredoxin]-disulfide + H2O = a ribonucleoside 5'-triphosphate + [thioredoxin]-dithiol. With respect to regulation, allosterically regulated by ATP and dNTP. The protein is Adenosylcobalamin-dependent ribonucleoside-triphosphate reductase (rtpR) of Lactobacillus gasseri (strain ATCC 33323 / DSM 20243 / BCRC 14619 / CIP 102991 / JCM 1131 / KCTC 3163 / NCIMB 11718 / NCTC 13722 / AM63).